Consider the following 130-residue polypeptide: MSAKTDEILESLKTLSLLEASELVKQIEEAFGVSAAASAGVVMAAPGAAGAGGGEAAEEKTEFDVVLESFDASAKIKVLKAVREATGLGLGDAKAMVEAAPKAIKEGVSKDEAEALKKAIEEVGGKVTLK.

It belongs to the bacterial ribosomal protein bL12 family. In terms of assembly, homodimer. Part of the ribosomal stalk of the 50S ribosomal subunit. Forms a multimeric L10(L12)X complex, where L10 forms an elongated spine to which 2 to 4 L12 dimers bind in a sequential fashion. Binds GTP-bound translation factors.

Its function is as follows. Forms part of the ribosomal stalk which helps the ribosome interact with GTP-bound translation factors. Is thus essential for accurate translation. This is Large ribosomal subunit protein bL12 from Synechococcus sp. (strain WH7803).